The following is a 3117-amino-acid chain: Centrosome-associated protein 350 (3117 aa).

The disordered stretch occupies residues 1-24; sequence MRSSKSKEVPLPNPRNSQSKDTVQ. Over residues 14–24 the composition is skewed to polar residues; the sequence is PRNSQSKDTVQ. Ser-86, Ser-139, Ser-142, and Ser-218 each carry phosphoserine. Disordered regions lie at residues 249–275, 436–514, 548–625, and 671–722; these read PKAL…ILKR, ILGP…NKQE, TVEL…TEQK, and LEEP…PPQP. A compositionally biased stretch (low complexity) spans 255-267; that stretch reads TDSSPSSTSTSNS. Positions 469-501 are enriched in basic and acidic residues; sequence GRAESDPRLDVLHRHLQRNSERSRSKSRSENNI. A phosphoserine mark is found at Ser-473 and Ser-507. A compositionally biased stretch (basic residues) spans 563–573; it reads PRSHSPVKRKP. Composition is skewed to basic and acidic residues over residues 591-625 and 694-703; these read YDTD…TEQK and ESDKENKVQE. A coiled-coil region spans residues 598–645; it reads QYIVRQQEERKRKQNEEKKAQKEATEQKNKRLQELYRKQKEAFTKVKN. Ser-695 is subject to Phosphoserine. Residues 705 to 718 are compositionally biased toward low complexity; the sequence is PPSASSSSDMSLSE. Thr-878 bears the Phosphothreonine mark. Ser-939 bears the Phosphoserine mark. Residues 981 to 992 are compositionally biased toward low complexity; that stretch reads SVSEGPLLSEGS. Residues 981 to 1002 are disordered; sequence SVSEGPLLSEGSLSEEEGDQDG. Ser-1061 carries the phosphoserine modification. The tract at residues 1081 to 1298 is disordered; it reads EDKLDRGTST…GFKPNAPLTD (218 aa). Positions 1087–1102 are enriched in polar residues; that stretch reads GTSTSRPLNATATPLS. A compositionally biased stretch (basic and acidic residues) spans 1135 to 1144; that stretch reads QEDHSNRKSA. Low complexity-rich tracts occupy residues 1153–1172 and 1251–1267; these read TSQH…STSS and QKTP…KSLQ. Phosphothreonine is present on Thr-1253. Residues Ser-1256 and Ser-1259 each carry the phosphoserine modification. Positions 1272-1283 are enriched in polar residues; that stretch reads GTSSERSKSSVM. The stretch at 1369–1411 forms a coiled coil; sequence IKAQQQRHERDLALLKLKAEQEALESQRQLEETRNKAAQVHAE. Disordered stretches follow at residues 1494–1674 and 1794–1854; these read TRTE…GGQD and KLKS…SRMD. Polar residues predominate over residues 1503 to 1512; the sequence is PSVSLSQSKE. Low complexity-rich tracts occupy residues 1522–1535 and 1543–1556; these read YSAS…SSGY and SSGS…SVPS. Basic and acidic residues predominate over residues 1558 to 1571; the sequence is KENEKKLNGEKIES. Phosphoserine is present on Ser-1613. Residues 1631–1647 are compositionally biased toward basic and acidic residues; the sequence is ESHRRFNMEKRRGHHDD. Ser-1648 and Ser-1653 each carry phosphoserine. Residues 1707–1800 adopt a coiled-coil conformation; that stretch reads KALKEKTKAE…LQEKLKSAGE (94 aa). The span at 1794 to 1815 shows a compositional bias: basic and acidic residues; sequence KLKSAGESKLDSHSDDDTKDNK. Position 1818 is a phosphoserine (Ser-1818). The span at 1827–1841 shows a compositional bias: low complexity; it reads RSPSPISISSSETSS. The stretch at 1856–1899 forms a coiled coil; the sequence is KFLTKREQKLMQRRQHAEELLEWKRRLDAEEAEIRQMEKQALAA. Residues 1903–1925 are compositionally biased toward basic and acidic residues; that stretch reads ELIKPKTPKKELEDQRTEQKEIA. Disordered regions lie at residues 1903–2020, 2107–2221, 2329–2356, and 2407–2432; these read ELIK…QCHL, ELSQ…ESGD, LKER…QKNT, and KDSQ…FGSN. At Ser-1936 the chain carries Phosphoserine. Positions 1983 to 2005 are enriched in polar residues; sequence ELESSTSPSKHSLPKSCTSVSKQ. Residues 2051-2110 adopt a coiled-coil conformation; sequence EGRIRALKDELRKRKSVVNQLKKEQKKRQKERLKAQEASLIKQLESYDEFIKKTEAELSQ. Polar residues predominate over residues 2111 to 2129; it reads DLETSPTAKPQIKTLSSAS. Ser-2115 is subject to Phosphoserine. The segment covering 2141–2170 has biased composition (basic and acidic residues); sequence HRSETAKNWKSLTESERSRGSLESIAEHVD. The span at 2173–2184 shows a compositional bias: polar residues; the sequence is LSGSERSVSERS. Residues 2191-2201 show a composition bias toward basic and acidic residues; sequence RVNEWDSRTED. Phosphothreonine is present on Thr-2204. Ser-2206 carries the phosphoserine modification. 2 stretches are compositionally biased toward basic and acidic residues: residues 2329–2338 and 2407–2417; these read LKERQSDQDM and KDSQSCRDKPQ. Over residues 2419–2432 the composition is skewed to polar residues; it reads MRSSTSGATSFGSN. 2 positions are modified to phosphoserine: Ser-2431 and Ser-2460. A compositionally biased stretch (basic and acidic residues) spans 2465-2478; it reads MKSKERSDVEHEQQ. Residues 2465–2485 form a disordered region; the sequence is MKSKERSDVEHEQQVTESPSL. One can recognise a CAP-Gly domain in the interval 2517–2559; that stretch reads GETSFAKGFWAGVELDKPEGNNNGTYDGIAYFECKEKHGIFAP. The residue at position 2689 (Thr-2689) is a Phosphothreonine. Residues 2719–2752 are a coiled coil; that stretch reads LLDLLTREKNQLEAQLKSSLNEEKKSKQQLEKIS. A phosphoserine mark is found at Ser-2830 and Ser-2839.

As to quaternary structure, part of a ternary complex that contains CEP350, CEP43 and MAPRE1. Interacts (via C-terminus) directly with CEP43 (via N-terminus). Interacts with NR1H3, PPARA, PPARD and PPARG. Interacts directly with microtubules. Interacts with the fusion protein CEP43-FGFR1, and by doing so recruits and activates PI3K and PLC-gamma. Interacts with CYLD. Interacts with CFAP157. Interacts with CEP19 (via C-terminus). Interacts with CEP78; promoting CEP78 localization to centrosome and centriole. Post-translationally, phosphorylated during mitosis. Detected in heart, brain, skeletal muscle, testis, placenta, lung, liver, kidney and pancreas.

It localises to the cytoplasm. The protein localises to the cytoskeleton. The protein resides in the microtubule organizing center. It is found in the centrosome. Its subcellular location is the spindle. It localises to the nucleus. The protein localises to the centriole. The protein resides in the cilium basal body. In terms of biological role, plays an essential role in centriole growth by stabilizing a procentriolar seed composed of at least, SASS6 and CPAP. Required for anchoring microtubules to the centrosomes and for the integrity of the microtubule network. Recruits PPARA to discrete subcellular compartments and thereby modulates PPARA activity. Required for ciliation. This is Centrosome-associated protein 350 from Homo sapiens (Human).